Reading from the N-terminus, the 321-residue chain is GDP-L-fucose synthase (321 aa).

An NADP(+)-binding site is contributed by 14–20 (GGSGLVG). The active-site Proton donor/acceptor is the Tyr-143. NADP(+)-binding positions include Lys-147, 170-173 (PTNV), and His-186. Positions 194, 208, 215, and 277 each coordinate substrate.

It belongs to the NAD(P)-dependent epimerase/dehydratase family. Fucose synthase subfamily. As to quaternary structure, homodimer.

The enzyme catalyses GDP-beta-L-fucose + NADP(+) = GDP-4-dehydro-alpha-D-rhamnose + NADPH + H(+). It functions in the pathway nucleotide-sugar biosynthesis; GDP-L-fucose biosynthesis via de novo pathway; GDP-L-fucose from GDP-alpha-D-mannose: step 2/2. Functionally, catalyzes the two-step NADP-dependent conversion of GDP-4-dehydro-6-deoxy-D-mannose to GDP-fucose, involving an epimerase and a reductase reaction. The protein is GDP-L-fucose synthase (GFUS) of Cricetulus griseus (Chinese hamster).